The sequence spans 828 residues: Phenylalanine--tRNA ligase beta subunit (828 aa).

The tRNA-binding domain occupies 44 to 155 (GPVDGPLTVG…GTAEPGADGA (112 aa)). The region spanning 411–486 (WSPPAIQMPA…RLEGLEVIGS (76 aa)) is the B5 domain. Positions 464, 470, 473, and 474 each coordinate Mg(2+). In terms of domain architecture, FDX-ACB spans 734–827 (SPFPAVFQDV…AAEAVGAELR (94 aa)).

Belongs to the phenylalanyl-tRNA synthetase beta subunit family. Type 1 subfamily. Tetramer of two alpha and two beta subunits. Mg(2+) is required as a cofactor.

It is found in the cytoplasm. It catalyses the reaction tRNA(Phe) + L-phenylalanine + ATP = L-phenylalanyl-tRNA(Phe) + AMP + diphosphate + H(+). This chain is Phenylalanine--tRNA ligase beta subunit, found in Mycolicibacterium paratuberculosis (strain ATCC BAA-968 / K-10) (Mycobacterium paratuberculosis).